Reading from the N-terminus, the 232-residue chain is BTB/POZ domain-containing protein KCTD11 (232 aa).

The BTB domain occupies 1 to 49; the sequence is MLGAMFRAGTPMPPNLNSQGGGHYFIDRDGKAFRHILNFLRLGRLDLPR.

As to quaternary structure, homopentamer. Interacts with KCTD6 and KCTD21; KCTD11 and KCTD6 or KCTD21 may associate in pentameric assemblies. Component of the BCR(KCTD11) E3 ubiquitin ligase complex, at least composed of CUL3 and KCTD11 and RBX1. Interacts (via BTB domain) with CUL3; initially a 4:4 stoichiometry has been reported, however, electron microscopy revealed pentameric states of the BTB domain. As to expression, higher expression in cerebellum than in whole brain and lower expression in medulloblastoma.

The protein operates within protein modification; protein ubiquitination. Plays a role as a marker and a regulator of neuronal differentiation; Up-regulated by a variety of neurogenic signals, such as retinoic acid, epidermal growth factor/EGF and NGFB/nerve growth factor. Induces apoptosis, growth arrest and the expression of cyclin-dependent kinase inhibitor CDKN1B. Plays a role as a tumor repressor and inhibits cell growth and tumorigenicity of medulloblastoma (MDB). Acts as a probable substrate-specific adapter for a BCR (BTB-CUL3-RBX1) E3 ubiquitin-protein ligase complex towards HDAC1. Functions as antagonist of the Hedgehog pathway on cell proliferation and differentiation by affecting the nuclear transfer of transcription factor GLI1, thus maintaining cerebellar granule cells in undifferentiated state, this effect probably occurs via HDAC1 down-regulation, keeping GLI1 acetylated and inactive. When knock-down, Hedgehog antagonism is impaired and proliferation of granule cells is sustained. Activates the caspase cascade. In Homo sapiens (Human), this protein is BTB/POZ domain-containing protein KCTD11 (KCTD11).